Consider the following 505-residue polypeptide: RNA-splicing ligase RtcB homolog (505 aa).

Positions 119, 122, 227, 259, and 353 each coordinate Mn(2+). 226–230 (NHYGE) provides a ligand contact to GMP. GMP contacts are provided by residues 353-354 (HN), 402-405 (GGTM), Ser-409, 428-431 (HGAG), and Lys-504. The active-site GMP-histidine intermediate is His-428.

Belongs to the RtcB family. As to quaternary structure, catalytic component of the tRNA-splicing ligase complex. Mn(2+) is required as a cofactor.

The catalysed reaction is a 3'-end 3'-phospho-ribonucleotide-RNA + a 5'-end dephospho-ribonucleoside-RNA + GTP = a ribonucleotidyl-ribonucleotide-RNA + GMP + diphosphate. The enzyme catalyses a 3'-end 2',3'-cyclophospho-ribonucleotide-RNA + a 5'-end dephospho-ribonucleoside-RNA + GTP + H2O = a ribonucleotidyl-ribonucleotide-RNA + GMP + diphosphate + H(+). Functionally, catalytic subunit of the tRNA-splicing ligase complex that acts by directly joining spliced tRNA halves to mature-sized tRNAs by incorporating the precursor-derived splice junction phosphate into the mature tRNA as a canonical 3',5'-phosphodiester. May act as an RNA ligase with broad substrate specificity, and may function toward other RNAs. This Brugia malayi (Filarial nematode worm) protein is RNA-splicing ligase RtcB homolog.